The following is a 279-amino-acid chain: Large ribosomal subunit protein uL2 (279 aa).

Residues 223-279 (TVRGSAMNPNDHPHGGGEGRSPVGMDAPRTPWGKRHMGVKTRNNKKSSTSMIVRRRK) form a disordered region. Residues 254–267 (WGKRHMGVKTRNNK) are compositionally biased toward basic residues.

It belongs to the universal ribosomal protein uL2 family. Part of the 50S ribosomal subunit. Forms a bridge to the 30S subunit in the 70S ribosome.

Functionally, one of the primary rRNA binding proteins. Required for association of the 30S and 50S subunits to form the 70S ribosome, for tRNA binding and peptide bond formation. It has been suggested to have peptidyltransferase activity; this is somewhat controversial. Makes several contacts with the 16S rRNA in the 70S ribosome. This Ureaplasma parvum serovar 3 (strain ATCC 27815 / 27 / NCTC 11736) protein is Large ribosomal subunit protein uL2.